The following is a 300-amino-acid chain: Eukaryotic translation initiation factor 3 subunit F (300 aa).

The MPN domain maps to 33 to 169; sequence VKVHPVALFS…VQCYVSALLG (137 aa).

This sequence belongs to the eIF-3 subunit F family. As to quaternary structure, component of the eukaryotic translation initiation factor 3 (eIF-3) complex.

It is found in the cytoplasm. Component of the eukaryotic translation initiation factor 3 (eIF-3) complex, which is involved in protein synthesis of a specialized repertoire of mRNAs and, together with other initiation factors, stimulates binding of mRNA and methionyl-tRNAi to the 40S ribosome. The eIF-3 complex specifically targets and initiates translation of a subset of mRNAs involved in cell proliferation. The polypeptide is Eukaryotic translation initiation factor 3 subunit F (Malassezia globosa (strain ATCC MYA-4612 / CBS 7966) (Dandruff-associated fungus)).